Consider the following 387-residue polypeptide: Patatin group D-2 (387 aa).

The signal sequence occupies residues 1–23 (MATTKSFLILIVMILATTSSTFA). The 199-residue stretch at 32–230 (LSIDGGGIKG…TVADPALLSI (199 aa)) folds into the PNPLA domain. Positions 36 to 41 (GGGIKG) match the GXGXXG motif. The GXSXG motif lies at 75–79 (GTSTG). The Nucleophile role is filled by Ser77. The N-linked (GlcNAc...) asparagine glycan is linked to Asn115. The active-site Proton acceptor is the Asp216. A DGA/G motif is present at residues 216–218 (DGA). Residues 361 to 385 (ETYEEALKRFAKLLSDRKKLRANKA) are a coiled coil.

This sequence belongs to the patatin family. Tuber.

Its subcellular location is the vacuole. Probable lipolytic acyl hydrolase (LAH), an activity which is thought to be involved in the response of tubers to pathogens. This chain is Patatin group D-2, found in Solanum tuberosum (Potato).